Reading from the N-terminus, the 80-residue chain is Cell division activator CedA (80 aa).

The protein belongs to the CedA family.

Functionally, activates the cell division inhibited by chromosomal DNA over-replication. The chain is Cell division activator CedA from Escherichia coli O1:K1 / APEC.